The primary structure comprises 976 residues: Villin-2 (976 aa).

Gelsolin-like repeat units lie at residues 27-77, 148-188, 260-302, 399-450, 531-571, and 633-674; these read FEAV…DEAG, IRLK…QERA, GKME…DERK, GKVK…EDQD, NKAV…EQLE, and FQVE…KEKQ. The interval 769–917 is disordered; it reads NSSSNRPAYS…SEIQPSGATF (149 aa). Over residues 782–794 the composition is skewed to basic and acidic residues; that stretch reads RLNESHDGPRQRA. 3 stretches are compositionally biased toward low complexity: residues 795 to 812, 823 to 841, and 848 to 858; these read EALA…SSTK, SQAS…VLVA, and DTSPTRRSTSS. Phosphoserine is present on Ser-890. A compositionally biased stretch (polar residues) spans 908-917; that stretch reads SEIQPSGATF. One can recognise an HP domain in the interval 911 to 976; it reads QPSGATFTYE…DLLKKKFDLF (66 aa).

Belongs to the villin/gelsolin family. Expressed in all tissues examined. Mainly detected in the root epidermis and vasculature. Expressed in the root cap.

The protein localises to the cytoplasm. Its subcellular location is the cytoskeleton. Ca(2+)-regulated actin-binding protein. Involved in actin filaments bundling. Caps the barbed end of actin filaments and is able to sever them in a calcium-dependent manner. Required for the construction of actin collars in pollen tubes. Acts redundantly with VLN5 (AC Q9LVC6) to generate thick actin filament bundles and to regulate polarized pollen tube growth. Acts redundantly with VLN3 (AC O81645) to regulate directional organ growth and in sclerenchyma development. This is Villin-2 from Arabidopsis thaliana (Mouse-ear cress).